Reading from the N-terminus, the 617-residue chain is Elongation factor 4 (617 aa).

Residues 17–203 enclose the tr-type G domain; the sequence is ERIRNFCIIA…RVCELVPHPV (187 aa). Residues 29–34 and 150–153 contribute to the GTP site; these read DHGKST and NKID.

It belongs to the TRAFAC class translation factor GTPase superfamily. Classic translation factor GTPase family. LepA subfamily.

It localises to the cell membrane. The catalysed reaction is GTP + H2O = GDP + phosphate + H(+). Functionally, required for accurate and efficient protein synthesis under certain stress conditions. May act as a fidelity factor of the translation reaction, by catalyzing a one-codon backward translocation of tRNAs on improperly translocated ribosomes. Back-translocation proceeds from a post-translocation (POST) complex to a pre-translocation (PRE) complex, thus giving elongation factor G a second chance to translocate the tRNAs correctly. Binds to ribosomes in a GTP-dependent manner. The protein is Elongation factor 4 of Corynebacterium urealyticum (strain ATCC 43042 / DSM 7109).